The following is a 226-amino-acid chain: MLHFGGFIMEINHISKILEKEREEYIRNKVEEYLKQGFSKDDAVNKANQSWRTYIGHRIQDVIYNLLKKFLKDSGLKVTTDKALNNRNLPEELDKVKRLIAINYGEYLFLPDADVIVYKVENNDIKIIAIISVKNSFRERRFETTYWKLKLKESPVTSHIKVFLATPDKDNEISYKCPNGKPKKMRIILEYELDGIYFLKEDFEETEKAKHFGKIVEDIIEISKKL.

This sequence belongs to the BsaWI type II restriction endonuclease family.

It catalyses the reaction Endonucleolytic cleavage of DNA to give specific double-stranded fragments with terminal 5'-phosphates.. In terms of biological role, a P subtype restriction enzyme that recognizes the double-stranded sequence 5'-CCGG-3'; the cleavage site is unknown. This Methanocaldococcus jannaschii (strain ATCC 43067 / DSM 2661 / JAL-1 / JCM 10045 / NBRC 100440) (Methanococcus jannaschii) protein is Putative type II restriction enzyme MjaVIP (mjaVIRP).